Reading from the N-terminus, the 198-residue chain is Holliday junction branch migration complex subunit RuvA (198 aa).

The domain I stretch occupies residues 1-63; sequence MIAYLSGAVR…EDAQLLFGFL (63 aa). Residues 64–142 are domain II; that stretch reads DTDSLRLFDL…EHLAAGAPVS (79 aa). The interval 143 to 150 is flexible linker; it reads AGKAALTS. The domain III stretch occupies residues 150–198; the sequence is STAGRDAIEALLALGFREPQVRSVVAELLAADPEQSADALIRKGLGKLR.

The protein belongs to the RuvA family. In terms of assembly, homotetramer. Forms an RuvA(8)-RuvB(12)-Holliday junction (HJ) complex. HJ DNA is sandwiched between 2 RuvA tetramers; dsDNA enters through RuvA and exits via RuvB. An RuvB hexamer assembles on each DNA strand where it exits the tetramer. Each RuvB hexamer is contacted by two RuvA subunits (via domain III) on 2 adjacent RuvB subunits; this complex drives branch migration. In the full resolvosome a probable DNA-RuvA(4)-RuvB(12)-RuvC(2) complex forms which resolves the HJ.

The protein resides in the cytoplasm. The RuvA-RuvB-RuvC complex processes Holliday junction (HJ) DNA during genetic recombination and DNA repair, while the RuvA-RuvB complex plays an important role in the rescue of blocked DNA replication forks via replication fork reversal (RFR). RuvA specifically binds to HJ cruciform DNA, conferring on it an open structure. The RuvB hexamer acts as an ATP-dependent pump, pulling dsDNA into and through the RuvAB complex. HJ branch migration allows RuvC to scan DNA until it finds its consensus sequence, where it cleaves and resolves the cruciform DNA. In Deinococcus geothermalis (strain DSM 11300 / CIP 105573 / AG-3a), this protein is Holliday junction branch migration complex subunit RuvA.